Reading from the N-terminus, the 378-residue chain is Homoserine O-acetyltransferase (378 aa).

One can recognise an AB hydrolase-1 domain in the interval 52–337 (NAILICHALT…YSQHGHDTFL (286 aa)). Residue S148 is the Nucleophile of the active site. R217 contacts substrate. Residues D304 and H333 contribute to the active site. Residue D334 participates in substrate binding.

Belongs to the AB hydrolase superfamily. MetX family. As to quaternary structure, homodimer.

The protein localises to the cytoplasm. The catalysed reaction is L-homoserine + acetyl-CoA = O-acetyl-L-homoserine + CoA. It functions in the pathway amino-acid biosynthesis; L-methionine biosynthesis via de novo pathway; O-acetyl-L-homoserine from L-homoserine: step 1/1. Functionally, transfers an acetyl group from acetyl-CoA to L-homoserine, forming acetyl-L-homoserine. The sequence is that of Homoserine O-acetyltransferase from Chloroherpeton thalassium (strain ATCC 35110 / GB-78).